A 530-amino-acid polypeptide reads, in one-letter code: UDP-glucuronosyltransferase 2B17 (530 aa).

The signal sequence occupies residues 1–23 (MPGKWISALLLLQISCCFQSGNC). The chain crosses the membrane as a helical span at residues 494-510 (VIGFLLTCSAVIAVLTV).

It belongs to the UDP-glycosyltransferase family.

It is found in the endoplasmic reticulum membrane. It catalyses the reaction glucuronate acceptor + UDP-alpha-D-glucuronate = acceptor beta-D-glucuronoside + UDP + H(+). The enzyme catalyses 17alpha-estradiol + UDP-alpha-D-glucuronate = 17alpha-estradiol 3-O-(beta-D-glucuronate) + UDP + H(+). It carries out the reaction 17alpha-estradiol + UDP-alpha-D-glucuronate = 17alpha-estradiol 17-O-(beta-D-glucuronate) + UDP + H(+). The catalysed reaction is 17beta-estradiol + UDP-alpha-D-glucuronate = 17beta-estradiol 17-O-(beta-D-glucuronate) + UDP + H(+). It catalyses the reaction 17beta-hydroxy-5alpha-androstan-3-one + UDP-alpha-D-glucuronate = 5alpha-dihydrotestosterone 17-O-(beta-D-glucuronate) + UDP + H(+). The enzyme catalyses testosterone + UDP-alpha-D-glucuronate = testosterone 17-O-(beta-D-glucuronate) + UDP + H(+). In terms of biological role, UDP-glucuronosyltransferase (UGT) that catalyzes phase II biotransformation reactions in which lipophilic substrates are conjugated with glucuronic acid to increase the metabolite's water solubility, thereby facilitating excretion into either the urine or bile. Catalyzes the glucuronidation of endogenous steroid hormones such as androgens (epitestosterone, androsterone) and estrogens (estradiol, epiestradiol). This Rattus norvegicus (Rat) protein is UDP-glucuronosyltransferase 2B17.